The primary structure comprises 235 residues: Phosphoribosylaminoimidazole-succinocarboxamide synthase (235 aa).

It belongs to the SAICAR synthetase family.

It carries out the reaction 5-amino-1-(5-phospho-D-ribosyl)imidazole-4-carboxylate + L-aspartate + ATP = (2S)-2-[5-amino-1-(5-phospho-beta-D-ribosyl)imidazole-4-carboxamido]succinate + ADP + phosphate + 2 H(+). The protein operates within purine metabolism; IMP biosynthesis via de novo pathway; 5-amino-1-(5-phospho-D-ribosyl)imidazole-4-carboxamide from 5-amino-1-(5-phospho-D-ribosyl)imidazole-4-carboxylate: step 1/2. The chain is Phosphoribosylaminoimidazole-succinocarboxamide synthase from Chlorobaculum tepidum (strain ATCC 49652 / DSM 12025 / NBRC 103806 / TLS) (Chlorobium tepidum).